A 117-amino-acid chain; its full sequence is Immunoglobulin heavy variable 3-11 (117 aa).

The signal sequence occupies residues 1-19; it reads MEFGLSWVFLVAIIKGVQC. Gln-20 carries the post-translational modification Pyrrolidone carboxylic acid. Residues 20 to 44 are framework-1; it reads QVQLVESGGGLVKPGGSLRLSCAAS. In terms of domain architecture, Ig-like spans 20–117; it reads QVQLVESGGG…EDTAVYYCAR (98 aa). Cys-41 and Cys-115 are oxidised to a cystine. A complementarity-determining-1 region spans residues 45–52; that stretch reads GFTFSDYY. The tract at residues 53–69 is framework-2; it reads MSWIRQAPGKGLEWVSY. The complementarity-determining-2 stretch occupies residues 70–77; the sequence is ISSSSSYT. Residues 78–115 form a framework-3 region; it reads NYADSVKGRFTISRDNAKNSLYLQMNSLRAEDTAVYYC. A complementarity-determining-3 region spans residues 116–117; the sequence is AR.

In terms of assembly, immunoglobulins are composed of two identical heavy chains and two identical light chains; disulfide-linked.

It localises to the secreted. The protein resides in the cell membrane. Functionally, v region of the variable domain of immunoglobulin heavy chains that participates in the antigen recognition. Immunoglobulins, also known as antibodies, are membrane-bound or secreted glycoproteins produced by B lymphocytes. In the recognition phase of humoral immunity, the membrane-bound immunoglobulins serve as receptors which, upon binding of a specific antigen, trigger the clonal expansion and differentiation of B lymphocytes into immunoglobulins-secreting plasma cells. Secreted immunoglobulins mediate the effector phase of humoral immunity, which results in the elimination of bound antigens. The antigen binding site is formed by the variable domain of one heavy chain, together with that of its associated light chain. Thus, each immunoglobulin has two antigen binding sites with remarkable affinity for a particular antigen. The variable domains are assembled by a process called V-(D)-J rearrangement and can then be subjected to somatic hypermutations which, after exposure to antigen and selection, allow affinity maturation for a particular antigen. The polypeptide is Immunoglobulin heavy variable 3-11 (Homo sapiens (Human)).